The chain runs to 783 residues: Flavin carrier protein 2 (783 aa).

Residues 1 to 22 (MIFLNTFARCLLTCFVLCSGTA) form the signal peptide. Residues 23–182 (RSSDTNDTTP…NGKTVQTKYA (160 aa)) lie on the Lumenal side of the membrane. 4 N-linked (GlcNAc...) asparagine glycosylation sites follow: asparagine 28, asparagine 65, asparagine 81, and asparagine 156. Residues 183-203 (AWPIAAISGVGVLTSGFVSVI) form a helical membrane-spanning segment. At 204-211 (GYSATAAH) the chain is on the cytoplasmic side. A helical transmembrane segment spans residues 212–232 (IASNSISLFIYFQNLAITAMM). The Lumenal portion of the chain corresponds to 233–347 (GVSRVPPIAA…AYLANIELSN (115 aa)). The N-linked (GlcNAc...) asparagine glycan is linked to asparagine 323. A helical membrane pass occupies residues 348 to 368 (FFLTGIVFFLFFLFVVVVSLI). Residues 369–402 (FFKALLEVLTRARILKETSNFFQYRKNWGSIIKG) lie on the Cytoplasmic side of the membrane. The chain crosses the membrane as a helical span at residues 403 to 423 (TLFRLSIIAFPQVSLLAIWEF). Residues 424–430 (TQVNSPA) are Lumenal-facing. The chain crosses the membrane as a helical span at residues 431 to 451 (IVVDAVVILLIITGLLVYGTI). The Cytoplasmic segment spans residues 452 to 492 (RVFIKGRESLRLYKNPAYLLYSDTYFLNKFGFLYVQFKADK). The chain crosses the membrane as a helical span at residues 493-513 (FWWLLPLLSYAFLRSLFVAVL). The Lumenal portion of the chain corresponds to 514-521 (QNQGKAQA). Residues 522-542 (MIIFVIELAYFVCLCWIRPYL) form a helical membrane-spanning segment. Over 543–547 (DKRTN) the chain is Cytoplasmic. The chain crosses the membrane as a helical span at residues 548 to 568 (VFNIAIHLVNLINAFFFLFFS). The Lumenal segment spans residues 569–581 (NLFKQPAVVSSVM). A helical transmembrane segment spans residues 582–602 (AVILFVLNAVFALFLLLFTIV). Over 603–783 (TCTLALLHRN…ENARNNNPYL (181 aa)) the chain is Cytoplasmic. The disordered stretch occupies residues 681–783 (RLFDDETSSS…ENARNNNPYL (103 aa)). Over residues 688–697 (SSSSFKQNSS) the composition is skewed to low complexity. Polar residues-rich tracts occupy residues 704–748 (VTEQ…TSSL) and 756–767 (YLGNSNKSYSHF). Low complexity predominate over residues 768–783 (NNNGSNENARNNNPYL).

It belongs to the transient receptor potential (TRP) ion channel family.

Its subcellular location is the endoplasmic reticulum membrane. In terms of biological role, may be responsible for the transport of FAD into the endoplasmic reticulum lumen, where it is required for oxidative protein folding. The sequence is that of Flavin carrier protein 2 (FLC2) from Saccharomyces cerevisiae (strain ATCC 204508 / S288c) (Baker's yeast).